The following is a 517-amino-acid chain: MFS-type transporter avaJ (517 aa).

The segment covering 1–12 has biased composition (basic and acidic residues); sequence MTSPEHSEDERQ. The disordered stretch occupies residues 1–28; the sequence is MTSPEHSEDERQPLLTKPSGPDESQSGF. A helical transmembrane segment spans residues 40–60; it reads AMWLLPMYTLYAITAGSLIIP. N63 is a glycosylation site (N-linked (GlcNAc...) asparagine). 5 helical membrane-spanning segments follow: residues 103–123, 131–151, 161–181, 204–224, and 230–250; these read IYGTVLSGILGAIAGPNLMGF, PILLISVLGPLIADIIVLAAL, WLLVGYAMDGLSGSIITATTA, AAFTSAFALGPLIAGGLLSVF, and AYWLAFTIHLSLIVLFTLALP. A glycan (N-linked (GlcNAc...) asparagine) is linked at N265. A run of 5 helical transmembrane segments spans residues 299–319, 338–358, 391–411, 442–462, and 476–496; these read MYIVAVTEAALFGVSMGLVPL, FLTGVNLWSILVLVAVVPLFM, LLLQVAGYITIAVVHSPLGVI, VLLGAVSFLHAISRILLPSGM, and ALFALLGFGSGIFLVASMFIG. N-linked (GlcNAc...) asparagine glycans are attached at residues N497 and N512.

Belongs to the major facilitator superfamily. TCR/Tet family.

It is found in the membrane. It functions in the pathway secondary metabolite biosynthesis. In terms of biological role, MFS-type transporter; part of the cluster that mediates the biosynthesis of a highly modified cyclo-arginine-tryptophan dipeptide (cRW). In Aspergillus versicolor, this protein is MFS-type transporter avaJ.